We begin with the raw amino-acid sequence, 1509 residues long: DNA polymerase alpha catalytic subunit (1509 aa).

Residues 1 to 162 (MNRPKREKKS…KKTKEKKNEI (162 aa)) form a disordered region. Basic and acidic residues-rich tracts occupy residues 21–35 (EQIKRARDGEKRTDQ) and 42–79 (ERKRLEQLKEQETEFDKEERKRKNRDFIEGDSGYRETS). A coiled-coil region spans residues 27–67 (RDGEKRTDQLQEEDDERKRLEQLKEQETEFDKEERKRKNRD). Residues 80 to 123 (DNEDEDEDEDDDGDNSDDDYSLDEDDEDGGGDGENNDSDQEEAI) are compositionally biased toward acidic residues. The segment covering 127-137 (RKKKRQVKKKS) has biased composition (basic residues). Residues 138 to 147 (KKDENGEPKV) show a composition bias toward basic and acidic residues. Residues 148–157 (KTPRVKKTKE) are compositionally biased toward basic residues. Coiled-coil stretches lie at residues 234-263 (APDSELDLEKLKEKQLELEKKLEKEALLNK) and 958-989 (LHGLVSKRREIKKRMEQEKNKIIKAQYDIQQQ). Zn(2+) contacts are provided by Cys-1328, Cys-1331, Cys-1355, Cys-1358, Cys-1389, Cys-1392, Cys-1406, and Cys-1411. A CysA-type zinc finger spans residues 1328–1358 (CPYCGQNNEFTGIVKIDSEGKSESGFDCNQC). Positions 1389-1411 (CTECEKVSKNYKETSYRCARPQC) match the CysB motif motif.

Belongs to the DNA polymerase type-B family.

Its subcellular location is the nucleus. The enzyme catalyses DNA(n) + a 2'-deoxyribonucleoside 5'-triphosphate = DNA(n+1) + diphosphate. Polymerase alpha in a complex with DNA primase is a replicative polymerase. The sequence is that of DNA polymerase alpha catalytic subunit (pola1) from Dictyostelium discoideum (Social amoeba).